A 110-amino-acid polypeptide reads, in one-letter code: Large ribosomal subunit protein uL22 (110 aa).

This sequence belongs to the universal ribosomal protein uL22 family. Part of the 50S ribosomal subunit.

This protein binds specifically to 23S rRNA; its binding is stimulated by other ribosomal proteins, e.g. L4, L17, and L20. It is important during the early stages of 50S assembly. It makes multiple contacts with different domains of the 23S rRNA in the assembled 50S subunit and ribosome. Its function is as follows. The globular domain of the protein is located near the polypeptide exit tunnel on the outside of the subunit, while an extended beta-hairpin is found that lines the wall of the exit tunnel in the center of the 70S ribosome. This chain is Large ribosomal subunit protein uL22, found in Desulfotalea psychrophila (strain LSv54 / DSM 12343).